The sequence spans 487 residues: Cytochrome P450 monooxygenase pyvB (487 aa).

A helical membrane pass occupies residues 17–37 (PAYSSVVIGALVVCLVCLVWP). Cys426 provides a ligand contact to heme.

The protein belongs to the cytochrome P450 family. The cofactor is heme.

It is found in the membrane. Its pathway is secondary metabolite biosynthesis. In terms of biological role, cytochrome P450 monooxygenase; part of the gene cluster that mediates the biosynthesis of pyranoviolin A, a pyranonigrin analog with a C-3 methoxy group. Initially, the PKS portion of pyvA synthesizes C-10 carbon chain from 5 molecules of malonyl-CoA, which is then condensed with the thiolation (T) domain-bound glycine activated by the adenylation (A) domain. The subsequent chain release by Dieckmann condensation (DKC) could be catalyzed by the TE domain present at the C-terminus of pyvA and/or the alpha/beta hydrolase pyvD, installing the tetramic acid moiety. The FAD-dependent monooxygenase pyvC next epoxidizes one of the olefins of the polyketide part, and the epoxide ring-opening induces the dihydro-gamma-pyrone ring formation. The cytochrome P450 monooxygeanse pyvB would be responsible for the 2 consecutive reactions, in which the dihydro-gamma-pyrone is oxidized to gamma-pyrone and C-7 is hydroxylated to yield pyranonigrin F. Finally, the O-methyltransferase pyvH methylates the C-3 hydroxy group to complete the biosynthesis. The chain is Cytochrome P450 monooxygenase pyvB from Aspergillus violaceofuscus (strain CBS 115571).